The primary structure comprises 898 residues: MRKGVLKDPEIADLFYKDDPEELFIGLHEIGHGSFGAVYFATNAHTSEVVAIKKMSYSGKQTHEKWQDILKEVKFLRQLKHPNTIEYKGCYLKEHTAWLVMEYCLGSASDLLEVHKKPLQEVEIAAITHGALHGLAYLHSHALIHRDIKAGNILLTEPGQVKLADFGSASMASPANSFVGTPYWMAPEVILAMDEGQYDGKVDIWSLGITCIELAERKPPLFNMNAMSALYHIAQNDSPTLQSNEWTDSFRRFVDYCLQKIPQERPTSAELLRHDFVRRDRPLRVLIDLIQRTKDAVRELDNLQYRKMKKILFQETRNGPLNESQEDEEDSEHGTSLNREMDSLGSNHSIPSMSVSTGSQSSSVNSMQEVMDESSSELVMMHDDESTINSSSSVVHKKDHVFIRDEAGHGDPRPEPRPTQSVQSQALHYRNRERFATIKSASLVTRQIHEHEQENELREQMSGYKRMRRQHQKQLIALENKLKAEMDEHRLKLQKEVETHANNSSIELEKLAKKQVAIIEKEAKVAAADEKKFQQQILAQQKKDLTTFLESQKKQYKICKEKIKEEMNEDHSTPKKEKQERISKHKENLQHTQAEEEAHLLTQQRLYYDKNCRFFKRKIMIKRHEVEQQNIREELNKKRTQKEMEHAMLIRHDESTRELEYRQLHTLQKLRMDLIRLQHQTELENQLEYNKRRERELHRKHVMELRQQPKNLKAMEMQIKKQFQDTCKVQTKQYKALKNHQLEVTPKNEHKTILKTLKDEQTRKLAILAEQYEQSINEMMASQALRLDEAQEAECQALRLQLQQEMELLNAYQSKIKMQTEAQHERELQKLEQRVSLRRAHLEQKIEEELAALQKERSERIKNLLERQEREIETFDMESLRMGFGNLVTLDFPKEDYR.

A Protein kinase domain is found at 24–277 (FIGLHEIGHG…SAELLRHDFV (254 aa)). ATP contacts are provided by residues 30-38 (IGHGSFGAV) and lysine 53. The active-site Proton acceptor is the aspartate 147. Disordered stretches follow at residues 316–362 (TRNG…SQSS) and 405–425 (DEAGHGDPRPEPRPTQSVQSQ). Residue serine 324 is modified to Phosphoserine; by ATM. Residues serine 331, serine 343, serine 346, and serine 349 each carry the phosphoserine modification. The span at 334 to 351 (GTSLNREMDSLGSNHSIP) shows a compositional bias: polar residues. Residues 352-362 (SMSVSTGSQSS) are compositionally biased toward low complexity. Threonine 357 carries the post-translational modification Phosphothreonine. Serine 359 is modified (phosphoserine). Positions 405-416 (DEAGHGDPRPEP) are enriched in basic and acidic residues. A Phosphoserine modification is found at serine 442. Coiled-coil stretches lie at residues 452-502 (EQEN…THAN), 548-649 (FLES…HAML), and 754-879 (LKTL…DMES). Residues 565 to 596 (EEMNEDHSTPKKEKQERISKHKENLQHTQAEE) form a disordered region. Lysine 830 carries the N6-acetyllysine modification.

The protein belongs to the protein kinase superfamily. STE Ser/Thr protein kinase family. STE20 subfamily. In terms of assembly, self-associates. Interacts with ERN1 and TRAF2. Interaction with TRAF2 is facilitated under ER stress conditions, such as treatment with tunicamycin, and may promote TRAF2 phosphorylation. Interacts (via N-terminus) with STK25; the interaction promotes STK25 abundance at the level of protein expression and/or stability. (Microbial infection) Interacts with herpes simplex virus 1 UL37 protein. Post-translationally, autophosphorylated. Phosphorylation at Ser-324 by ATM following DNA damage is required for activation of the p38/MAPK14 stress-activated MAPK cascade. Phosphorylated at Ser-324 and on Tyr residues during T cell activation. Phosphorylated by LRRK2. As to expression, ubiquitously expressed at a low level, and highly expressed in peripheral blood leukocytes (PBLs), thymus, spleen, kidney, skeletal muscle, heart and liver.

The protein resides in the cytoplasm. Its subcellular location is the cell membrane. It is found in the membrane raft. It localises to the lipid droplet. It carries out the reaction L-seryl-[protein] + ATP = O-phospho-L-seryl-[protein] + ADP + H(+). The enzyme catalyses L-threonyl-[protein] + ATP = O-phospho-L-threonyl-[protein] + ADP + H(+). In terms of biological role, serine/threonine-protein kinase that acts as a regulator of the p38/MAPK14 stress-activated MAPK cascade and of the MAPK8/JNK cascade. In response to DNA damage, involved in the G2/M transition DNA damage checkpoint by activating the p38/MAPK14 stress-activated MAPK cascade, probably by mediating phosphorylation of upstream MAP2K3 and MAP2K6 kinases. Inhibits basal activity of the MAPK8/JNK cascade and diminishes its activation in response to epidermal growth factor (EGF). Positively regulates canonical T cell receptor (TCR) signaling by preventing early PTPN6/SHP1-mediated inactivation of LCK, ensuring sustained TCR signaling that is required for optimal activation and differentiation of T cells. Phosphorylates PTPN6/SHP1 on 'Thr-394', leading to its polyubiquitination and subsequent proteasomal degradation. Required for cell surface expression of metalloprotease ADAM10 on type 1 transitional B cells which is necessary for their NOTCH-mediated development into marginal zone B cells. Also required for the NOTCH-mediated terminal differentiation of splenic conventional type 2 dendritic cells. Positively regulates osteoblast differentiation by acting as an upstream activator of the JNK pathway. Promotes JNK signaling in hepatocytes and positively regulates hepatocyte lipid storage by inhibiting beta-oxidation and triacylglycerol secretion while enhancing lipid synthesis. Restricts age-associated inflammation by negatively regulating differentiation of macrophages and their production of pro-inflammatory cytokines. Plays a role in negatively regulating the abundance of regulatory T cells in white adipose tissue. In Homo sapiens (Human), this protein is Serine/threonine-protein kinase TAO3 (TAOK3).